We begin with the raw amino-acid sequence, 634 residues long: Threonine--tRNA ligase (634 aa).

A TGS domain is found at 1-61 (MINIRFPDGS…NSNCELRLIT (61 aa)). A catalytic region spans residues 241-532 (DHRKIGKVLD…LIEHYAGNLP (292 aa)). Zn(2+) is bound by residues C332, H383, and H509.

The protein belongs to the class-II aminoacyl-tRNA synthetase family. In terms of assembly, homodimer. It depends on Zn(2+) as a cofactor.

The protein resides in the cytoplasm. It carries out the reaction tRNA(Thr) + L-threonine + ATP = L-threonyl-tRNA(Thr) + AMP + diphosphate + H(+). Functionally, catalyzes the attachment of threonine to tRNA(Thr) in a two-step reaction: L-threonine is first activated by ATP to form Thr-AMP and then transferred to the acceptor end of tRNA(Thr). Also edits incorrectly charged L-seryl-tRNA(Thr). This Francisella tularensis subsp. holarctica (strain FTNF002-00 / FTA) protein is Threonine--tRNA ligase.